Consider the following 251-residue polypeptide: 3-deoxy-manno-octulosonate cytidylyltransferase (251 aa).

The protein belongs to the KdsB family.

The protein localises to the cytoplasm. The enzyme catalyses 3-deoxy-alpha-D-manno-oct-2-ulosonate + CTP = CMP-3-deoxy-beta-D-manno-octulosonate + diphosphate. The protein operates within nucleotide-sugar biosynthesis; CMP-3-deoxy-D-manno-octulosonate biosynthesis; CMP-3-deoxy-D-manno-octulosonate from 3-deoxy-D-manno-octulosonate and CTP: step 1/1. It participates in bacterial outer membrane biogenesis; lipopolysaccharide biosynthesis. In terms of biological role, activates KDO (a required 8-carbon sugar) for incorporation into bacterial lipopolysaccharide in Gram-negative bacteria. The chain is 3-deoxy-manno-octulosonate cytidylyltransferase from Vibrio vulnificus (strain CMCP6).